A 475-amino-acid chain; its full sequence is Amino acid permease 8 (475 aa).

Residues 1–22 (MDAYNNPSAVESGDAAVKSVDD) are disordered. Topologically, residues 1 to 31 (MDAYNNPSAVESGDAAVKSVDDDGREKRTGT) are cytoplasmic. A run of 2 helical transmembrane segments spans residues 32-52 (FWTA…LSLA) and 53-73 (WAIA…FAII). Residues 74 to 120 (TYYTSTLLADCYRSPDSITGTRNYNYMGVVRSYLGGKKVQLCGVAQY) are Cytoplasmic-facing. Residues 121–141 (VNLVGVTIGYTITASISLVAI) form a helical membrane-spanning segment. At 142–157 (GKSNCYHDKGHKAKCS) the chain is on the extracellular side. Residues 158–178 (VSNYPYMAAFGIVQIILSQLP) traverse the membrane as a helical segment. At 179–185 (NFHKLSF) the chain is on the cytoplasmic side. Residues 186 to 206 (LSIIAAVMSFSYASIGIGLAI) form a helical membrane-spanning segment. The Extracellular segment spans residues 207–236 (ATVASGKIGKTELTGTVIGVDVTASEKVWK). Residues 237-257 (LFQAIGDIAFSYAFTTILIEI) form a helical membrane-spanning segment. Over 258-276 (QDTLRSSPPENKVMKRASL) the chain is Cytoplasmic. The helical transmembrane segment at 277-297 (VGVSTTTVFYILCGCIGYAAF) threads the bilayer. Over 298–314 (GNQAPGDFLTDFGFYEP) the chain is Extracellular. The helical transmembrane segment at 315-335 (YWLIDFANACIALHLIGAYQV) threads the bilayer. At 336-378 (YAQPFFQFVEENCNKKWPQSNFINKEYSSKVPLLGKCRVNLFR) the chain is on the cytoplasmic side. Residues 379–398 (LVWRTCYVVLTTFVAMIFPF) form a helical membrane-spanning segment. Residues 399–401 (FNA) lie on the Extracellular side of the membrane. The helical transmembrane segment at 402 to 424 (ILGLLGAFAFWPLTVYFPVAMHI) threads the bilayer. The Cytoplasmic portion of the chain corresponds to 425 to 441 (AQAKVKKYSRRWLALNL). The helical transmembrane segment at 442 to 462 (LVLVCLIVSALAAVGSIIGLI) threads the bilayer. The Extracellular portion of the chain corresponds to 463–475 (NSVKSYKPFKNLD).

This sequence belongs to the amino acid/polyamine transporter 2 family. Amino acid/auxin permease (AAAP) (TC 2.A.18.2) subfamily. Expressed in flower buds, siliques, developing seeds and funiculi.

The protein resides in the cell membrane. Functionally, amino acid-proton symporter. Stereospecific transporter with a broad specificity for glutamate, aspartate and neutral and acidic amino acids. This chain is Amino acid permease 8 (AAP8), found in Arabidopsis thaliana (Mouse-ear cress).